The chain runs to 225 residues: MPVKLAQALANPLFPALDSALRSGRHIGLDELDNHAFLMDFQEYLEEFYARYNVELIRAPEGFFYLRPRSTTLIPRSVLSELDMMVGKILCYLYLSPERLANEGIFTQQELYDELLTLADEAKLLKLVNNRSTGSDIDRQKLQEKVRSSLNRLRRLGMVWFMGHDSSKFRITESVFRFGADVRAGDDPREAQRRLIRDGEAMPIENHLQLNDETEENQPDSGEEE.

Residues 197-225 form a disordered region; it reads RDGEAMPIENHLQLNDETEENQPDSGEEE. The segment covering 212 to 225 has biased composition (acidic residues); the sequence is DETEENQPDSGEEE.

Belongs to the MukE family. As to quaternary structure, interacts, and probably forms a ternary complex, with MukF and MukB. The complex formation is stimulated by calcium or magnesium.

It is found in the cytoplasm. The protein localises to the nucleoid. Its function is as follows. Involved in chromosome condensation, segregation and cell cycle progression. May participate in facilitating chromosome segregation by condensation DNA from both sides of a centrally located replisome during cell division. Probably acts via its interaction with MukB and MukF. This Escherichia coli O157:H7 protein is Chromosome partition protein MukE.